The chain runs to 577 residues: Insulin-like growth factor 2 mRNA-binding protein 1 (577 aa).

2 RRM domains span residues 2–75 (NKLY…HSVP) and 81–156 (RKIQ…YIPD). Residues serine 12 and serine 73 each carry the phosphoserine modification. Residues 160–190 (AQGPENGRRGGFGSRGQPRQGSPVAAGAPAK) are disordered. Residue serine 181 is modified to Phosphoserine. KH domains lie at 195-260 (DIPL…CKMI), 276-343 (EVPL…EQEI), 405-470 (QEMV…QGRI), and 487-553 (KLET…QRKI). The sufficient for nuclear export stretch occupies residues 310 to 324 (ITISSLQDLTLYNPE). The segment at 485 to 495 (EVKLETHIRVP) is sufficient for nuclear export. Threonine 528 is modified (phosphothreonine).

Belongs to the RRM IMP/VICKZ family. Can form homodimers and heterodimers with IGF2BP1 and IGF2BP3. Component of the coding region determinant (CRD)-mediated complex, composed of DHX9, HNRNPU, IGF2BP1, SYNCRIP and YBX1. During HCV infection, identified in a HCV IRES-mediated translation complex, at least composed of EIF3C, IGF2BP1, RPS3 and HCV RNA-replicon. Interacts (via the KH domains) with HIV-1 GAG (via the second zinc finger motif of NC). Associates (via the RRM domains and KH domains) with HIV-1 particles. Identified in a mRNP complex, composed of at least DHX9, DDX3X, ELAVL1, HNRNPU, IGF2BP1, ILF3, PABPC1, PCBP2, PTBP2, STAU1, STAU2, SYNCRIP and YBX1. Identified in a IGF2BP1-dependent mRNP granule complex containing untranslated mRNAs. Interacts with DHX9, ELAVL2, HNRNPA2B1, HNRNPC, HNRNPH1, HNRNPU, IGF2BP2, ILF2, and YBX1. Interacts with FMR1. Component of a multisubunit autoregulatory RNP complex (ARC), at least composed of IGF2BP1, PABPC1 and CSDE1/UNR. Directly interacts with PABPC1. Component of a TAU mRNP complex, at least composed of IGF2BP1, ELAVL4 and G3BP. Interacts with ELAVL4 in an RNA-dependent manner. Associates with microtubules and polysomes. Interacts with AGO1 and AGO2. Interacts with ELAVL1 and MATR3. Interacts (via KH3 and KH4 domains) with SEPIN14P20 peptide RBRP; the interaction results in increased binding of IGF2BP1 to N6-methyladenosine (m6A)-containing mRNAs. In terms of processing, phosphorylated at Ser-181 by mTORC2 cotranslationally, promoting binding to the 3'-UTR of IGF2 mRNA. As to expression, mainly expressed in the embryo, including in fetal liver, fetal lung, fetal kidney, fetal thymus (at protein level). Also expressed follicles of ovary, as well as in gonocytes of testis, spermatogonia, semen, oocytes and placenta (at protein level). Expressed in various cancers, including testis and lung cancers (at protein level), as well as kidney, prostate and trachea cancers.

It is found in the nucleus. Its subcellular location is the cytoplasm. The protein resides in the perinuclear region. It localises to the P-body. The protein localises to the stress granule. It is found in the cell projection. Its subcellular location is the lamellipodium. The protein resides in the dendrite. It localises to the dendritic spine. The protein localises to the growth cone. It is found in the filopodium. Its subcellular location is the axon. In terms of biological role, RNA-binding factor that recruits target transcripts to cytoplasmic protein-RNA complexes (mRNPs). This transcript 'caging' into mRNPs allows mRNA transport and transient storage. It also modulates the rate and location at which target transcripts encounter the translational apparatus and shields them from endonuclease attacks or microRNA-mediated degradation. Preferentially binds to N6-methyladenosine (m6A)-containing mRNAs and increases their stability. Plays a direct role in the transport and translation of transcripts required for axonal regeneration in adult sensory neurons. Regulates localized beta-actin/ACTB mRNA translation, a crucial process for cell polarity, cell migration and neurite outgrowth. Co-transcriptionally associates with the ACTB mRNA in the nucleus. This binding involves a conserved 54-nucleotide element in the ACTB mRNA 3'-UTR, known as the 'zipcode'. The RNP thus formed is exported to the cytoplasm, binds to a motor protein and is transported along the cytoskeleton to the cell periphery. During transport, prevents ACTB mRNA from being translated into protein. When the RNP complex reaches its destination near the plasma membrane, IGF2BP1 is phosphorylated. This releases the mRNA, allowing ribosomal 40S and 60S subunits to assemble and initiate ACTB protein synthesis. Monomeric ACTB then assembles into the subcortical actin cytoskeleton. During neuronal development, key regulator of neurite outgrowth, growth cone guidance and neuronal cell migration, presumably through the spatiotemporal fine tuning of protein synthesis, such as that of ACTB. May regulate mRNA transport to activated synapses. Binds to and stabilizes ABCB1/MDR-1 mRNA. During interstinal wound repair, interacts with and stabilizes PTGS2 transcript. PTGS2 mRNA stabilization may be crucial for colonic mucosal wound healing. Binds to the 3'-UTR of IGF2 mRNA by a mechanism of cooperative and sequential dimerization and regulates IGF2 mRNA subcellular localization and translation. Binds to MYC mRNA, in the coding region instability determinant (CRD) of the open reading frame (ORF), hence preventing MYC cleavage by endonucleases and possibly microRNA targeting to MYC-CRD. Binding to MYC mRNA is enhanced by m6A-modification of the CRD. Binds to the 3'-UTR of CD44 mRNA and stabilizes it, hence promotes cell adhesion and invadopodia formation in cancer cells. Binds to the oncofetal H19 transcript and to the neuron-specific TAU mRNA and regulates their localizations. Binds to and stabilizes BTRC/FBW1A mRNA. Binds to the adenine-rich autoregulatory sequence (ARS) located in PABPC1 mRNA and represses its translation. PABPC1 mRNA-binding is stimulated by PABPC1 protein. Prevents BTRC/FBW1A mRNA degradation by disrupting microRNA-dependent interaction with AGO2. Promotes the directed movement of tumor-derived cells by fine-tuning intracellular signaling networks. Binds to MAPK4 3'-UTR and inhibits its translation. Interacts with PTEN transcript open reading frame (ORF) and prevents mRNA decay. This combined action on MAPK4 (down-regulation) and PTEN (up-regulation) antagonizes HSPB1 phosphorylation, consequently it prevents G-actin sequestration by phosphorylated HSPB1, allowing F-actin polymerization. Hence enhances the velocity of cell migration and stimulates directed cell migration by PTEN-modulated polarization. Interacts with Hepatitis C virus (HCV) 5'-UTR and 3'-UTR and specifically enhances translation at the HCV IRES, but not 5'-cap-dependent translation, possibly by recruiting eIF3. Interacts with HIV-1 GAG protein and blocks the formation of infectious HIV-1 particles. Reduces HIV-1 assembly by inhibiting viral RNA packaging, as well as assembly and processing of GAG protein on cellular membranes. During cellular stress, such as oxidative stress or heat shock, stabilizes target mRNAs that are recruited to stress granules, including CD44, IGF2, MAPK4, MYC, PTEN, RAPGEF2 and RPS6KA5 transcripts. This is Insulin-like growth factor 2 mRNA-binding protein 1 (IGF2BP1) from Homo sapiens (Human).